The sequence spans 177 residues: ATP-dependent protease subunit HslV (177 aa).

T6 is an active-site residue. Residues S161, C164, and T167 each contribute to the Na(+) site.

It belongs to the peptidase T1B family. HslV subfamily. In terms of assembly, a double ring-shaped homohexamer of HslV is capped on each side by a ring-shaped HslU homohexamer. The assembly of the HslU/HslV complex is dependent on binding of ATP.

The protein resides in the cytoplasm. The catalysed reaction is ATP-dependent cleavage of peptide bonds with broad specificity.. Its activity is regulated as follows. Allosterically activated by HslU binding. Functionally, protease subunit of a proteasome-like degradation complex believed to be a general protein degrading machinery. This is ATP-dependent protease subunit HslV from Thermodesulfovibrio yellowstonii (strain ATCC 51303 / DSM 11347 / YP87).